Here is a 223-residue protein sequence, read N- to C-terminus: Endonuclease NucS (223 aa).

The protein belongs to the NucS endonuclease family.

Its subcellular location is the cytoplasm. In terms of biological role, cleaves both 3' and 5' ssDNA extremities of branched DNA structures. This is Endonuclease NucS from Mycolicibacterium gilvum (strain PYR-GCK) (Mycobacterium gilvum (strain PYR-GCK)).